A 309-amino-acid polypeptide reads, in one-letter code: Elongation factor Ts (309 aa).

An involved in Mg(2+) ion dislocation from EF-Tu region spans residues 82–85 (TDFV).

It belongs to the EF-Ts family.

The protein resides in the cytoplasm. In terms of biological role, associates with the EF-Tu.GDP complex and induces the exchange of GDP to GTP. It remains bound to the aminoacyl-tRNA.EF-Tu.GTP complex up to the GTP hydrolysis stage on the ribosome. The sequence is that of Elongation factor Ts from Rickettsia akari (strain Hartford).